The following is a 2271-amino-acid chain: Serine-rich adhesin for platelets (2271 aa).

The N-terminal stretch at Met1–Phe89 is a signal peptide. The interval Ala90–Ala230 is serine-rich repeat region 1, SRR1. Residues Leu100 to Asn111 are compositionally biased toward polar residues. The disordered stretch occupies residues Leu100–Thr229. Residues Ser112–Thr128 are compositionally biased toward low complexity. The segment covering Lys129–Asp140 has biased composition (polar residues). Over residues Val150 to Thr229 the composition is skewed to low complexity. Residues Pro231–Asn751 form a non-repeat region (NRR) region. The interval Phe245–Tyr491 is L-lectin module. Ca(2+) is bound by residues Asp365, Tyr367, Asn369, and Asp382. Positions Thr492 to Phe571 are beta-grasp module. Positions Thr572–Val659 are cadherin-like module-1. Asp573, Lys575, Asp601, Asn602, Asp645, Asp661, Thr663, Asp690, Asn691, and Asp734 together coordinate Ca(2+). A cadherin-like module-2 region spans residues Val660–Asn751. Disordered stretches follow at residues Asn751–Thr791 and Ser806–Leu2242. 3 stretches are compositionally biased toward low complexity: residues Ser752–Thr791, Ser806–Ser1392, and Ser1402–Glu2214. Residues Ser752–Thr2232 form a serine-rich repeat region 2, SRR2 region. An LPXTG sorting signal motif is present at residues Leu2229–Gly2233. Residue Thr2232 is modified to Pentaglycyl murein peptidoglycan amidated threonine. The propeptide at Gly2233–Ala2271 is removed by sortase.

The protein belongs to the serine-rich repeat protein (SRRP) family. Post-translationally, proteolytically cleaved by a metalloprotease. In terms of processing, glycosylated. It is probable that most of the Ser residues in SSR1 and SSR2 are O-GlcNAcylated. Sequential glycosylation by sugar transferases are able to generate complex sugar polymorphisms.

It is found in the secreted. The protein localises to the cell wall. In terms of biological role, mediates binding to human platelets, possibly through a receptor-ligand interaction. Probably associated with virulence in endovascular infection. Plays a positive role in biofilm formation, possibly by self-association via the non-repeat region (NRR or binding region, BR). Binds to and plays a role in human lung epithelial cell invasion via the L-lectin module of its NRR domain; N-acetylneuraminic acid (Neu5Ac) inhibits binding. Treatment of host cells with neuraminidase decreases adherence of S.aureus cells, suggesting SraP recognizes a host terminal Neu5Ac moiety as a receptor. This Staphylococcus aureus (strain NCTC 8325 / PS 47) protein is Serine-rich adhesin for platelets.